The primary structure comprises 468 residues: UDP-N-acetylmuramate--L-alanine ligase (468 aa).

Position 114–120 (114–120 (GTHGKTT)) interacts with ATP.

It belongs to the MurCDEF family.

The protein localises to the cytoplasm. It catalyses the reaction UDP-N-acetyl-alpha-D-muramate + L-alanine + ATP = UDP-N-acetyl-alpha-D-muramoyl-L-alanine + ADP + phosphate + H(+). Its pathway is cell wall biogenesis; peptidoglycan biosynthesis. Its function is as follows. Cell wall formation. The chain is UDP-N-acetylmuramate--L-alanine ligase from Brucella anthropi (strain ATCC 49188 / DSM 6882 / CCUG 24695 / JCM 21032 / LMG 3331 / NBRC 15819 / NCTC 12168 / Alc 37) (Ochrobactrum anthropi).